The sequence spans 149 residues: 3-dehydroquinate dehydratase (149 aa).

Y22 (proton acceptor) is an active-site residue. 3 residues coordinate substrate: N73, H79, and D86. The active-site Proton donor is the H99. Substrate is bound by residues 100–101 and R110; that span reads LS.

Belongs to the type-II 3-dehydroquinase family. Homododecamer.

It catalyses the reaction 3-dehydroquinate = 3-dehydroshikimate + H2O. It participates in metabolic intermediate biosynthesis; chorismate biosynthesis; chorismate from D-erythrose 4-phosphate and phosphoenolpyruvate: step 3/7. In terms of biological role, catalyzes a trans-dehydration via an enolate intermediate. In Prochlorococcus marinus (strain MIT 9313), this protein is 3-dehydroquinate dehydratase.